Here is a 215-residue protein sequence, read N- to C-terminus: MGKGDPKKPRGKMSSYAFFVQTCREEHKKKHPDASVNFSEFSKKCSERWKTMSAKEKGKFEDMAKADKARYEREMKTYIPPKGETKKKFKDPNAPKRPPSAFFLFCSEYRPKIKGEHPGLSIGDVAKKLGEMWNNTAADDKQPYEKKAAKLKEKYEKDIAAYRAKGKPDAAKKGVVKAEKSKKKKEEEEDEEDEEDEEEEEDEEDEEEEEDDDDE.

Residue 2-10 (GKGDPKKPR) participates in heparin binding. The segment at 2-97 (GKGDPKKPRG…KFKDPNAPKR (96 aa)) is sufficient for interaction with HAVCR2. An N6-acetyllysine mark is found at Lys3, Lys7, Lys8, and Lys12. The LPS binding (delipidated) stretch occupies residues 3 to 15 (KGDPKKPRGKMSS). The segment at residues 9 to 79 (PRGKMSSYAF…RYEREMKTYI (71 aa)) is a DNA-binding region (HMG box 1). Cys23 carries the cysteine sulfonic acid (-SO3H); alternate modification. Cys23 and Cys45 are disulfide-bonded. Positions 27 to 43 (HKKKHPDASVNFSEFSK) match the Nuclear localization signal (NLS) 1 motif. N6-acetyllysine is present on residues Lys28, Lys29, and Lys30. Residue Lys28 forms an Isoglutamyl lysine isopeptide (Lys-Gln) (interchain with Q-?) linkage. At Ser35 the chain carries Phosphoserine. N6-acetyllysine is present on Lys43. Isoglutamyl lysine isopeptide (Lys-Gln) (interchain with Q-?) cross-links involve residues Lys43 and Lys44. Cys45 is modified (cysteine sulfonic acid (-SO3H); alternate). Lys68 is covalently cross-linked (Isoglutamyl lysine isopeptide (Lys-Gln) (interchain with Q-?)). Residues 76–95 (KTYIPPKGETKKKFKDPNAP) form a disordered region. The LPS binding (Lipid A) stretch occupies residues 80 to 96 (PPKGETKKKFKDPNAPK). Residues 83–94 (GETKKKFKDPNA) are compositionally biased toward basic and acidic residues. The cytokine-stimulating activity stretch occupies residues 89–108 (FKDPNAPKRPPSAFFLFCSE). Lys90 carries the post-translational modification N6-acetyllysine. Residues 95–163 (PKRPPSAFFL…KYEKDIAAYR (69 aa)) constitute a DNA-binding region (HMG box 2). Ser100 is subject to Phosphoserine. Cys106 bears the Cysteine sulfonic acid (-SO3H) mark. Lys127, Lys128, Lys141, Lys172, Lys173, Lys177, and Lys180 each carry N6-acetyllysine. The interval 150-183 (KLKEKYEKDIAAYRAKGKPDAAKKGVVKAEKSKK) is binding to AGER/RAGE. A compositionally biased stretch (basic and acidic residues) spans 161-179 (AYRAKGKPDAAKKGVVKAE). The interval 161–215 (AYRAKGKPDAAKKGVVKAEKSKKKKEEEEDEEDEEDEEEEEDEEDEEEEEDDDDE) is disordered. The Nuclear localization signal (NLS) 2 motif lies at 178 to 184 (AEKSKKK). Lys180 is covalently cross-linked (Isoglutamyl lysine isopeptide (Lys-Gln) (interchain with Q-?)). The residue at position 181 (Ser181) is an ADP-ribosylserine. 4 positions are modified to N6-acetyllysine: Lys182, Lys183, Lys184, and Lys185. Residues Lys182, Lys183, and Lys184 each participate in an isoglutamyl lysine isopeptide (Lys-Gln) (interchain with Q-?) cross-link. Residues 187 to 215 (EEEDEEDEEDEEEEEDEEDEEEEEDDDDE) show a composition bias toward acidic residues.

This sequence belongs to the HMGB family. Interacts (fully reduced HMGB1) with CXCL12; probably in a 1:2 ratio involving two molecules of CXCL12, each interacting with one HMG box of HMGB1; inhibited by glycyrrhizin. Associates with the TLR4:LY96 receptor complex. Component of the RAG complex composed of core components RAG1 and RAG2, and associated component HMGB1 or HMGB2. Interacts (in cytoplasm upon starvation) with BECN1; inhibits the interaction of BECN1 and BCL2 leading to promotion of autophagy. Interacts with KPNA1; involved in nuclear import. Interacts with AGER. Interacts with SREBF1, TLR2, TLR4, TLR9, PTPRZ1, APEX1, FEN1, POLB, TERT. Interacts with IL1B, MSH2, XPA, XPC, HNF1A, TP53. Interacts with CD24; the probable CD24:SIGLEC10 complex is proposed to inhibit HGMB1-mediated tissue damage immune response. Interacts with THBD; prevents HGMB1 interaction with ACER/RAGE and inhibits HGMB1 pro-inflammatory activity. Interacts with HAVCR2; impairs HMGB1 binding to B-DNA and likely HMGB1-mediated innate immune response. Interacts with XPO1; mediating nuclear export. Interacts with receptor RAGE/AGER. Phosphorylated at serine residues. Phosphorylation in both NLS regions is required for cytoplasmic translocation followed by secretion. Post-translationally, acetylated on multiple sites upon stimulation with LPS. Acetylation on lysine residues in the nuclear localization signals (NLS 1 and NLS 2) leads to cytoplasmic localization and subsequent secretion. Acetylation on Lys-3 results in preferential binding to DNA ends and impairs DNA bending activity. In terms of processing, reduction/oxidation of cysteine residues Cys-23, Cys-45 and Cys-106 and a possible intramolecular disulfide bond involving Cys-23 and Cys-45 give rise to different redox forms with specific functional activities in various cellular compartments: 1- fully reduced HMGB1 (HMGB1C23hC45hC106h), 2- disulfide HMGB1 (HMGB1C23-C45C106h) and 3- sulfonyl HMGB1 (HMGB1C23soC45soC106so). Poly-ADP-ribosylated by PARP1 when secreted following stimulation with LPS. Post-translationally, in vitro cleavage by CASP1 is liberating a HMG box 1-containing peptide which may mediate immunogenic activity; the peptide antagonizes apoptosis-induced immune tolerance. Can be proteolytically cleaved by a thrombin:thrombomodulin complex; reduces binding to heparin and pro-inflammatory activities. In terms of processing, forms covalent cross-links mediated by transglutaminase TGM2, between a glutamine and the epsilon-amino group of a lysine residue, forming homopolymers and heteropolymers.

It localises to the nucleus. The protein localises to the chromosome. The protein resides in the cytoplasm. It is found in the secreted. Its subcellular location is the cell membrane. It localises to the endosome. The protein localises to the endoplasmic reticulum-Golgi intermediate compartment. In terms of biological role, multifunctional redox sensitive protein with various roles in different cellular compartments. In the nucleus is one of the major chromatin-associated non-histone proteins and acts as a DNA chaperone involved in replication, transcription, chromatin remodeling, V(D)J recombination, DNA repair and genome stability. Proposed to be an universal biosensor for nucleic acids. Promotes host inflammatory response to sterile and infectious signals and is involved in the coordination and integration of innate and adaptive immune responses. In the cytoplasm functions as a sensor and/or chaperone for immunogenic nucleic acids implicating the activation of TLR9-mediated immune responses, and mediates autophagy. Acts as a danger-associated molecular pattern (DAMP) molecule that amplifies immune responses during tissue injury. Released to the extracellular environment can bind DNA, nucleosomes, IL-1 beta, CXCL12, AGER isoform 2/sRAGE, lipopolysaccharide (LPS) and lipoteichoic acid (LTA), and activates cells through engagement of multiple surface receptors. In the extracellular compartment fully reduced HMGB1 (released by necrosis) acts as a chemokine, disulfide HMGB1 (actively secreted) as a cytokine, and sulfonyl HMGB1 (released from apoptotic cells) promotes immunological tolerance. Has proangiogenic activity. May be involved in platelet activation. Binds to phosphatidylserine and phosphatidylethanolamide. Bound to RAGE mediates signaling for neuronal outgrowth. May play a role in accumulation of expanded polyglutamine (polyQ) proteins. Nuclear functions are attributed to fully reduced HGMB1. Associates with chromatin and binds DNA with a preference to non-canonical DNA structures such as single-stranded DNA, DNA-containing cruciforms or bent structures, supercoiled DNA and ZDNA. Can bent DNA and enhance DNA flexibility by looping thus providing a mechanism to promote activities on various gene promoters by enhancing transcription factor binding and/or bringing distant regulatory sequences into close proximity. May be involved in nucleotide excision repair (NER), mismatch repair (MMR) and base excision repair (BER) pathways, and double strand break repair such as non-homologous end joining (NHEJ). Involved in V(D)J recombination by acting as a cofactor of the RAG complex: acts by stimulating cleavage and RAG protein binding at the 23 bp spacer of conserved recombination signal sequences (RSS). In vitro can displace histone H1 from highly bent DNA. Can restructure the canonical nucleosome leading to relaxation of structural constraints for transcription factor-binding. Enhances binding of sterol regulatory element-binding proteins (SREBPs) such as SREBF1 to their cognate DNA sequences and increases their transcriptional activities. Facilitates binding of TP53 to DNA. May be involved in mitochondrial quality control and autophagy in a transcription-dependent fashion implicating HSPB1. Can modulate the activity of the telomerase complex and may be involved in telomere maintenance. Functionally, in the cytoplasm proposed to dissociate the BECN1:BCL2 complex via competitive interaction with BECN1 leading to autophagy activation. Involved in oxidative stress-mediated autophagy. Can protect BECN1 and ATG5 from calpain-mediated cleavage and thus proposed to control their proautophagic and proapoptotic functions and to regulate the extent and severity of inflammation-associated cellular injury. In myeloid cells has a protective role against endotoxemia and bacterial infection by promoting autophagy. Involved in endosomal translocation and activation of TLR9 in response to CpG-DNA in macrophages. Its function is as follows. In the extracellular compartment (following either active secretion or passive release)involved in regulation of the inflammatory response. Fully reduced HGMB1 (which subsequently gets oxidized after release) in association with CXCL12 mediates the recruitment of inflammatory cells during the initial phase of tissue injury; the CXCL12:HMGB1 complex triggers CXCR4 homodimerization. Induces the migration of monocyte-derived immature dendritic cells and seems to regulate adhesive and migratory functions of neutrophils implicating AGER/RAGE and ITGAM. Can bind to various types of DNA and RNA including microbial unmethylated CpG-DNA to enhance the innate immune response to nucleic acids. Proposed to act in promiscuous DNA/RNA sensing which cooperates with subsequent discriminative sensing by specific pattern recognition receptors. Promotes extracellular DNA-induced AIM2 inflammasome activation implicating AGER/RAGE. Disulfide HMGB1 binds to transmembrane receptors, such as AGER/RAGE, TLR2, TLR4 and probably TREM1, thus activating their signal transduction pathways. Mediates the release of cytokines/chemokines such as TNF, IL-1, IL-6, IL-8, CCL2, CCL3, CCL4 and CXCL10. Promotes secretion of interferon-gamma by macrophage-stimulated natural killer (NK) cells in concert with other cytokines like IL-2 or IL-12. TLR4 is proposed to be the primary receptor promoting macrophage activation and signaling through TLR4 seems to implicate LY96/MD-2. In bacterial LPS- or LTA-mediated inflammatory responses binds to the endotoxins and transfers them to CD14 for signaling to the respective TLR4:LY96 and TLR2 complexes. Contributes to tumor proliferation by association with ACER/RAGE. Can bind to IL1-beta and signals through the IL1R1:IL1RAP receptor complex. Binding to class A CpG activates cytokine production in plasmacytoid dendritic cells implicating TLR9, MYD88 and AGER/RAGE and can activate autoreactive B cells. Via HMGB1-containing chromatin immune complexes may also promote B cell responses to endogenous TLR9 ligands through a B-cell receptor (BCR)-dependent and ACER/RAGE-independent mechanism. Inhibits phagocytosis of apoptotic cells by macrophages; the function is dependent on poly-ADP-ribosylation and involves binding to phosphatidylserine on the cell surface of apoptotic cells. In adaptive immunity may be involved in enhancing immunity through activation of effector T-cells and suppression of regulatory T (TReg) cells. In contrast, without implicating effector or regulatory T-cells, required for tumor infiltration and activation of T-cells expressing the lymphotoxin LTA:LTB heterotrimer thus promoting tumor malignant progression. Also reported to limit proliferation of T-cells. Released HMGB1:nucleosome complexes formed during apoptosis can signal through TLR2 to induce cytokine production. Involved in induction of immunological tolerance by apoptotic cells; its pro-inflammatory activities when released by apoptotic cells are neutralized by reactive oxygen species (ROS)-dependent oxidation specifically on Cys-106. During macrophage activation by activated lymphocyte-derived self apoptotic DNA (ALD-DNA) promotes recruitment of ALD-DNA to endosomes. In Bos taurus (Bovine), this protein is High mobility group protein B1 (HMGB1).